The sequence spans 1234 residues: DNA-directed RNA polymerase subunit beta (1234 aa).

The interval Val1189–Asp1212 is disordered. Residues Asn1195–Asp1212 are compositionally biased toward acidic residues.

Belongs to the RNA polymerase beta chain family. The RNAP catalytic core consists of 2 alpha, 1 beta, 1 beta' and 1 omega subunit. When a sigma factor is associated with the core the holoenzyme is formed, which can initiate transcription.

It catalyses the reaction RNA(n) + a ribonucleoside 5'-triphosphate = RNA(n+1) + diphosphate. Functionally, DNA-dependent RNA polymerase catalyzes the transcription of DNA into RNA using the four ribonucleoside triphosphates as substrates. The polypeptide is DNA-directed RNA polymerase subunit beta (Clostridium kluyveri (strain NBRC 12016)).